Reading from the N-terminus, the 691-residue chain is Elongation factor G (691 aa).

The 275-residue stretch at 8–282 (ERVRNIGIAA…AVIDYLPAPI (275 aa)) folds into the tr-type G domain. GTP-binding positions include 17 to 24 (AHIDAGKT), 81 to 85 (DTPGH), and 135 to 138 (NKMD).

Belongs to the TRAFAC class translation factor GTPase superfamily. Classic translation factor GTPase family. EF-G/EF-2 subfamily.

The protein resides in the cytoplasm. Functionally, catalyzes the GTP-dependent ribosomal translocation step during translation elongation. During this step, the ribosome changes from the pre-translocational (PRE) to the post-translocational (POST) state as the newly formed A-site-bound peptidyl-tRNA and P-site-bound deacylated tRNA move to the P and E sites, respectively. Catalyzes the coordinated movement of the two tRNA molecules, the mRNA and conformational changes in the ribosome. The chain is Elongation factor G from Prochlorococcus marinus (strain SARG / CCMP1375 / SS120).